Here is a 270-residue protein sequence, read N- to C-terminus: Tryptophan synthase alpha chain (270 aa).

Residues glutamate 49 and aspartate 60 each act as proton acceptor in the active site.

It belongs to the TrpA family. Tetramer of two alpha and two beta chains.

It carries out the reaction (1S,2R)-1-C-(indol-3-yl)glycerol 3-phosphate + L-serine = D-glyceraldehyde 3-phosphate + L-tryptophan + H2O. The protein operates within amino-acid biosynthesis; L-tryptophan biosynthesis; L-tryptophan from chorismate: step 5/5. The alpha subunit is responsible for the aldol cleavage of indoleglycerol phosphate to indole and glyceraldehyde 3-phosphate. The polypeptide is Tryptophan synthase alpha chain (Pseudomonas syringae pv. tomato (strain ATCC BAA-871 / DC3000)).